Here is a 232-residue protein sequence, read N- to C-terminus: Vacuolar iron transporter homolog 1 (232 aa).

Residues 1–59 (MAIDLGCHVGCASPETKQEETADPTAAPVVVDDVEAAAGGRRPGDGGGVNYVARAQWLR) are Cytoplasmic-facing. Residues 60–80 (AAVLGANDGLVSVASLMVGVG) traverse the membrane as a helical segment. Over 81–89 (AANGTRRAM) the chain is Vacuolar. The helical transmembrane segment at 90–110 (LVSGLAGLVAGACSMAIGEFV) threads the bilayer. Over 111-148 (SVYAQCDIQAAQIERARGGKDADGGEEEEELPSPTMAA) the chain is Cytoplasmic. Residues 149–169 (VASALSFAAGAALPLLAGGFV) form a helical membrane-spanning segment. The Vacuolar segment spans residues 170–175 (RPWAAR). The chain crosses the membrane as a helical span at residues 176-196 (VAAVCAASSLGLAGFGVASAY). At 197 to 208 (LGGAGVARSGVR) the chain is on the cytoplasmic side. The chain crosses the membrane as a helical span at residues 209-229 (MLVGGWLAMAVTYGVLKLFGM). Residues 230–232 (HGV) lie on the Vacuolar side of the membrane.

It belongs to the CCC1 family.

Its subcellular location is the vacuole membrane. It carries out the reaction Fe(2+)(in) = Fe(2+)(out). In terms of biological role, probable vacuolar iron transporter that may be involved in the regulation of iron distribution throughout the plant. The chain is Vacuolar iron transporter homolog 1 from Oryza sativa subsp. japonica (Rice).